The chain runs to 407 residues: ATP phosphoribosyltransferase regulatory subunit (407 aa).

This sequence belongs to the class-II aminoacyl-tRNA synthetase family. HisZ subfamily. In terms of assembly, heteromultimer composed of HisG and HisZ subunits.

It is found in the cytoplasm. It functions in the pathway amino-acid biosynthesis; L-histidine biosynthesis; L-histidine from 5-phospho-alpha-D-ribose 1-diphosphate: step 1/9. In terms of biological role, required for the first step of histidine biosynthesis. May allow the feedback regulation of ATP phosphoribosyltransferase activity by histidine. This chain is ATP phosphoribosyltransferase regulatory subunit, found in Rippkaea orientalis (strain PCC 8801 / RF-1) (Cyanothece sp. (strain PCC 8801)).